We begin with the raw amino-acid sequence, 92 residues long: C-C motif chemokine 4 (92 aa).

An N-terminal signal peptide occupies residues 1–23 (MKLCVTVLSLLMLVAAFCSPALS). Intrachain disulfides connect cysteine 34–cysteine 58 and cysteine 35–cysteine 74.

It belongs to the intercrine beta (chemokine CC) family. As to quaternary structure, homodimer and heterodimer of MIP-1-alpha(4-69) and MIP-1-beta(3-69). In terms of processing, N-terminal processed form MIP-1-beta(3-69) is produced by proteolytic cleavage after secretion from peripheral blood lymphocytes.

Its subcellular location is the secreted. Functionally, monokine with inflammatory and chemokinetic properties. Binds to CCR5. One of the major HIV-suppressive factors produced by CD8+ T-cells. Recombinant MIP-1-beta induces a dose-dependent inhibition of different strains of HIV-1, HIV-2, and simian immunodeficiency virus (SIV). The processed form MIP-1-beta(3-69) retains the abilities to induce down-modulation of surface expression of the chemokine receptor CCR5 and to inhibit the CCR5-mediated entry of HIV-1 in T-cells. MIP-1-beta(3-69) is also a ligand for CCR1 and CCR2 isoform B. This Homo sapiens (Human) protein is C-C motif chemokine 4 (CCL4).